The sequence spans 147 residues: Probable disulfide formation protein (147 aa).

A helical transmembrane segment spans residues 9-28 (NYSLYFAWLTALIATLGSLY). An intrachain disulfide couples Cys-38 to Cys-41. Transmembrane regions (helical) follow at residues 43–62 (YQRV…AYRT) and 69–86 (YALP…YQYL). A disulfide bond links Cys-99 and Cys-106. A helical transmembrane segment spans residues 115-138 (GFITLPFLGMLATLIMSFFLIMAF).

Belongs to the DsbB family. BdbC subfamily.

It is found in the cell inner membrane. Its function is as follows. Required for disulfide bond formation in some proteins. The polypeptide is Probable disulfide formation protein (Coxiella burnetii (strain CbuG_Q212) (Coxiella burnetii (strain Q212))).